Reading from the N-terminus, the 182-residue chain is UPF0149 protein CGSHiGG_07585 (182 aa).

The protein belongs to the UPF0149 family.

The protein is UPF0149 protein CGSHiGG_07585 of Haemophilus influenzae (strain PittGG).